Reading from the N-terminus, the 347-residue chain is Selenide, water dikinase (347 aa).

C16 is an active-site residue. ATP contacts are provided by residues K19 and 47–49 (TRD). D50 is a binding site for Mg(2+). ATP is bound by residues D67, D90, and 138–140 (GHS). D90 provides a ligand contact to Mg(2+). D226 serves as a coordination point for Mg(2+).

Belongs to the selenophosphate synthase 1 family. Class I subfamily. As to quaternary structure, homodimer. Mg(2+) serves as cofactor.

The enzyme catalyses hydrogenselenide + ATP + H2O = selenophosphate + AMP + phosphate + 2 H(+). Synthesizes selenophosphate from selenide and ATP. This is Selenide, water dikinase from Photorhabdus laumondii subsp. laumondii (strain DSM 15139 / CIP 105565 / TT01) (Photorhabdus luminescens subsp. laumondii).